Here is a 128-residue protein sequence, read N- to C-terminus: MKKLLLTVIQIALLFIFARLINWVTAALHINIPGSIIGIVILFTLLHFKIIKLEWIELGAAWLLGELLLFFIPSAVGVIEYGDIMSKFGVSILLVVVISTFVVMVSTGTLTQLIAKRKEKKQTCSSES.

Transmembrane regions (helical) follow at residues leucine 4–valine 24, alanine 27–leucine 46, glycine 59–isoleucine 79, and phenylalanine 88–glycine 108.

It belongs to the CidA/LrgA family. CidA subfamily.

It localises to the cell membrane. In terms of biological role, increases the activity of extracellular murein hydrolases possibly by mediating their export via hole formation. Inhibited by the antiholin-like proteins LrgAB. In an unstressed cell, the LrgAB products probably inhibit the function of the CidA protein. When a cell is stressed by the addition of antibiotics or by other factors in the environment, CidA possibly oligomerizes within the bacterial cell membrane, creating lesions that disrupt the proton motive force, which in turn results in loss of cell viability. These lesions are also hypothesized to regulate the subsequent cell lysis by either allowing the murein hydrolases access to the cell wall substrate and/or regulating their activity by a possible change in the cell wall pH that results from loss of membrane potential. The protein is Holin-like protein CidA of Bacillus velezensis (strain DSM 23117 / BGSC 10A6 / LMG 26770 / FZB42) (Bacillus amyloliquefaciens subsp. plantarum).